Reading from the N-terminus, the 180-residue chain is ATP synthase subunit delta (180 aa).

This sequence belongs to the ATPase delta chain family. In terms of assembly, F-type ATPases have 2 components, F(1) - the catalytic core - and F(0) - the membrane proton channel. F(1) has five subunits: alpha(3), beta(3), gamma(1), delta(1), epsilon(1). F(0) has three main subunits: a(1), b(2) and c(10-14). The alpha and beta chains form an alternating ring which encloses part of the gamma chain. F(1) is attached to F(0) by a central stalk formed by the gamma and epsilon chains, while a peripheral stalk is formed by the delta and b chains.

Its subcellular location is the cell membrane. Functionally, f(1)F(0) ATP synthase produces ATP from ADP in the presence of a proton or sodium gradient. F-type ATPases consist of two structural domains, F(1) containing the extramembraneous catalytic core and F(0) containing the membrane proton channel, linked together by a central stalk and a peripheral stalk. During catalysis, ATP synthesis in the catalytic domain of F(1) is coupled via a rotary mechanism of the central stalk subunits to proton translocation. In terms of biological role, this protein is part of the stalk that links CF(0) to CF(1). It either transmits conformational changes from CF(0) to CF(1) or is implicated in proton conduction. The polypeptide is ATP synthase subunit delta (Alkaliphilus metalliredigens (strain QYMF)).